Reading from the N-terminus, the 87-residue chain is uncharacterized protein (87 aa).

A run of 2 helical transmembrane segments spans residues 8–28 (IVVLIGTQLAASAVILFIFDL) and 47–67 (LAGSFAFYLFSAGLFFLLIGL).

It is found in the cell membrane. This is an uncharacterized protein from Bacillus subtilis (strain 168).